Reading from the N-terminus, the 186-residue chain is ATP synthase subunit delta (186 aa).

It belongs to the ATPase delta chain family. In terms of assembly, F-type ATPases have 2 components, F(1) - the catalytic core - and F(0) - the membrane proton channel. F(1) has five subunits: alpha(3), beta(3), gamma(1), delta(1), epsilon(1). F(0) has three main subunits: a(1), b(2) and c(10-14). The alpha and beta chains form an alternating ring which encloses part of the gamma chain. F(1) is attached to F(0) by a central stalk formed by the gamma and epsilon chains, while a peripheral stalk is formed by the delta and b chains.

It localises to the cell inner membrane. F(1)F(0) ATP synthase produces ATP from ADP in the presence of a proton or sodium gradient. F-type ATPases consist of two structural domains, F(1) containing the extramembraneous catalytic core and F(0) containing the membrane proton channel, linked together by a central stalk and a peripheral stalk. During catalysis, ATP synthesis in the catalytic domain of F(1) is coupled via a rotary mechanism of the central stalk subunits to proton translocation. Its function is as follows. This protein is part of the stalk that links CF(0) to CF(1). It either transmits conformational changes from CF(0) to CF(1) or is implicated in proton conduction. The sequence is that of ATP synthase subunit delta from Ruegeria pomeroyi (strain ATCC 700808 / DSM 15171 / DSS-3) (Silicibacter pomeroyi).